The following is a 643-amino-acid chain: Long-chain fatty acid transport protein 4 (643 aa).

2 helical membrane-spanning segments follow: residues L20 to I42 and F139 to I156. Y243–K254 serves as a coordination point for AMP.

This sequence belongs to the ATP-dependent AMP-binding enzyme family.

Its subcellular location is the endoplasmic reticulum membrane. It carries out the reaction a fatty acid(in) = a fatty acid(out). The catalysed reaction is (9Z,12Z)-octadecadienoate(out) = (9Z,12Z)-octadecadienoate(in). It catalyses the reaction (9Z)-octadecenoate(out) = (9Z)-octadecenoate(in). The enzyme catalyses hexadecanoate(out) = hexadecanoate(in). It carries out the reaction a long-chain fatty acid + ATP + CoA = a long-chain fatty acyl-CoA + AMP + diphosphate. The catalysed reaction is (5Z,8Z,11Z,14Z)-eicosatetraenoate + ATP + CoA = (5Z,8Z,11Z,14Z)-eicosatetraenoyl-CoA + AMP + diphosphate. It catalyses the reaction (9Z)-octadecenoate + ATP + CoA = (9Z)-octadecenoyl-CoA + AMP + diphosphate. The enzyme catalyses hexadecanoate + ATP + CoA = hexadecanoyl-CoA + AMP + diphosphate. It carries out the reaction (E)-hexadec-2-enoate + ATP + CoA = (2E)-hexadecenoyl-CoA + AMP + diphosphate. The catalysed reaction is a very long-chain fatty acid + ATP + CoA = a very long-chain fatty acyl-CoA + AMP + diphosphate. It catalyses the reaction tetracosanoate + ATP + CoA = tetracosanoyl-CoA + AMP + diphosphate. Mediates the import of long-chain fatty acids (LCFA) into the cell by facilitating their transport across cell membranes. Appears to be the principal fatty acid transporter in small intestinal enterocytes. Also functions as an acyl-CoA ligase catalyzing the ATP-dependent formation of fatty acyl-CoA using LCFA and very-long-chain fatty acids (VLCFA) as substrates, which prevents fatty acid efflux from cells and might drive more fatty acid uptake. Plays a role in the formation of the epidermal barrier. Required for fat absorption in early embryogenesis. Probably involved in fatty acid transport across the blood barrier. Indirectly inhibits RPE65 via substrate competition and via production of VLCFA derivatives like lignoceroyl-CoA. Prevents light-induced degeneration of rods and cones. The protein is Long-chain fatty acid transport protein 4 (SLC27A4) of Pongo abelii (Sumatran orangutan).